Here is a 137-residue protein sequence, read N- to C-terminus: S-protein homolog 16 (137 aa).

The first 21 residues, 1 to 21 (MKNLLVFIFVFSLCMFDHVSG), serve as a signal peptide directing secretion. The N-linked (GlcNAc...) asparagine glycan is linked to N87.

The protein belongs to the plant self-incompatibility (S1) protein family.

It localises to the secreted. The chain is S-protein homolog 16 from Arabidopsis thaliana (Mouse-ear cress).